Consider the following 145-residue polypeptide: Probable flagellum biosynthesis repressor protein FlbT (145 aa).

This sequence belongs to the FlbT family.

Functionally, has a post-transcriptional repressor function in flagellum biogenesis. Associates with the 5'-UTR of fljK mRNA and promotes its degradation. This chain is Probable flagellum biosynthesis repressor protein FlbT, found in Chelativorans sp. (strain BNC1).